Consider the following 613-residue polypeptide: MVKNLIFWLVITVVLMSVFQNFNSSDTSNHRVDYSTFLSEVNQDQVREAYINGRIISVTKKDSSKYITYIPINDPKLLDNLLTKNVKIVGEIPEEPSLLISIFISWFPMLLLIGVWIFFMRQMQMGGGKGAMSFGKSKARMLSEDQIQTTFADVAGCDEAKEEVSELVEYLKEPSRFQKLGGKIPKGILMVGPPGTGKTLLAKAIAGEAKVPFFTISGSDFVEMFVGVGASRVRDMFEHARKSAPCIIFIDEIDAVGRQRGAGLGGGHDEREQTLNQMLVEMDGFDGNEGVILIAATNRPDVLDPALLRPGRFDRQVIVALPDVRGRKQILKVHMRKVPLSEDVDPMIIARGTPGFSGADLANLVNEAALFAARFNNRVVSMIHFEKAKDKIMMGSERRSMVMSDFQKESTAYHEAGHVIIGRLVPDHDPAHKVTIIPRGQALGITFFLPESDILSISRQKLESQISTLYGGRLAEEIIYGSQNVSTGAFNDIKVATNLARNMVTQWGFSDKLGPLLYAEEEGEVFLGRSVAKAKHMSDETARIIDEEVKLLIEVNYNRARKILNENLDILHAMKDALIKYETIDSLQIDDLMERREVRKPKGWLEVDQKKDI.

The Cytoplasmic portion of the chain corresponds to 1 to 4 (MVKN). The helical transmembrane segment at 5–25 (LIFWLVITVVLMSVFQNFNSS) threads the bilayer. Topologically, residues 26–98 (DTSNHRVDYS…VGEIPEEPSL (73 aa)) are extracellular. Residues 99 to 119 (LISIFISWFPMLLLIGVWIFF) form a helical membrane-spanning segment. Topologically, residues 120 to 613 (MRQMQMGGGK…WLEVDQKKDI (494 aa)) are cytoplasmic. 192 to 199 (GPPGTGKT) contacts ATP. Residue histidine 414 participates in Zn(2+) binding. Residue glutamate 415 is part of the active site. Positions 418 and 492 each coordinate Zn(2+).

This sequence in the central section; belongs to the AAA ATPase family. In the C-terminal section; belongs to the peptidase M41 family. As to quaternary structure, homohexamer. The cofactor is Zn(2+).

The protein resides in the cell membrane. Its function is as follows. Acts as a processive, ATP-dependent zinc metallopeptidase for both cytoplasmic and membrane proteins. Plays a role in the quality control of integral membrane proteins. The chain is ATP-dependent zinc metalloprotease FtsH from Buchnera aphidicola subsp. Schizaphis graminum (strain Sg).